Reading from the N-terminus, the 639-residue chain is mRNA export factor (639 aa).

Disordered stretches follow at residues 1 to 45 (MQAE…SLES), 63 to 287 (LLGD…KWGA), and 322 to 355 (CTAR…SQPR). The span at 142–152 (PRRRTHARSRS) shows a compositional bias: basic residues. The span at 153–169 (PRAGSTSSQQPPSSSGG) shows a compositional bias: low complexity. The span at 175–189 (VRREAGDRETSEKPA) shows a compositional bias: basic and acidic residues. A compositionally biased stretch (polar residues) spans 203-215 (HQCQSPPAQTASQ). 2 stretches are compositionally biased toward basic and acidic residues: residues 234–247 (RTPH…HEGA) and 326–348 (DPAR…ERRT). Zn(2+) contacts are provided by Cys525, His606, Cys610, and Cys615. A CHC2-type zinc finger spans residues 525 to 615 (CHLAASKSPL…HANVCRKEEC (91 aa)).

The protein belongs to the HHV-1 ICP27 protein family.

The protein localises to the host cytoplasm. It is found in the host nucleus. Functionally, multifunctional regulator of the expression of viral genes that mediates nuclear export of viral intronless mRNAs. This immediate early (EI) protein promotes the nuclear export of viral intronless mRNAs. This is mRNA export factor from Amazona oratrix (yellow-headed parrot).